Consider the following 156-residue polypeptide: 6,7-dimethyl-8-ribityllumazine synthase (156 aa).

5-amino-6-(D-ribitylamino)uracil is bound by residues Phe-22, 57 to 59 (AVE), and 81 to 83 (SVI). 86–87 (GT) lines the (2S)-2-hydroxy-3-oxobutyl phosphate pocket. The active-site Proton donor is His-89. Phe-114 is a 5-amino-6-(D-ribitylamino)uracil binding site. Arg-128 is a binding site for (2S)-2-hydroxy-3-oxobutyl phosphate.

This sequence belongs to the DMRL synthase family. Forms an icosahedral capsid composed of 60 subunits, arranged as a dodecamer of pentamers.

The enzyme catalyses (2S)-2-hydroxy-3-oxobutyl phosphate + 5-amino-6-(D-ribitylamino)uracil = 6,7-dimethyl-8-(1-D-ribityl)lumazine + phosphate + 2 H2O + H(+). Its pathway is cofactor biosynthesis; riboflavin biosynthesis; riboflavin from 2-hydroxy-3-oxobutyl phosphate and 5-amino-6-(D-ribitylamino)uracil: step 1/2. Functionally, catalyzes the formation of 6,7-dimethyl-8-ribityllumazine by condensation of 5-amino-6-(D-ribitylamino)uracil with 3,4-dihydroxy-2-butanone 4-phosphate. This is the penultimate step in the biosynthesis of riboflavin. The sequence is that of 6,7-dimethyl-8-ribityllumazine synthase from Vibrio vulnificus (strain CMCP6).